Reading from the N-terminus, the 808-residue chain is MEAESPCAASDLAVARRELLSGNHRELDPVGLRQTWLDLHESWLIDKADEIGIADASGFAIVGVGGLGRRELLPYSDLDVLLLHDGKPADILRPVADRLWYPLWDANIRLDHSVRTVSEALTIANSDLMAALGMLEARHIAGDQQLSFALIDGVRRQWRNGIRSRMGELVEMTYARWRRCGRIAQRAEPDLKLGRGGLRDVQLLDALALAQLIDRHGIGHTDLPAGSLDGAYRTLLDVRTELHRVSGRGRDHLLAQFADEISAALGFGDRFDLARTLSSAGRTIGYHAEAGLRTAANALPRRGISALVRRPKRRPLDEGVVEYAGEIVLARDAEPEHDPGLVLRVAAASADTGLPIGAATLSRLAASVPDLPTPWPQEALDDLLVVLSAGPTTVATIEALDRTGLWGRLLPEWEPIRDLPPRDVAHKWTVDRHVVETAVHAAPLATRVARPDLLALGALLHDIGKGRGTDHSVLGAELVIPVCTRLGLSPPDVRTLSKLVRHHLLLPITATRRDLNDPKTIEAVSEALGGDPQLLEVLHALSEADSKATGPGVWSDWKASLVDDLVRRCRMVMAGESLPQAEPTAPHYLSLAADHGVHVEISPRDGERIDAVIVAPDERGLVSKAAAVLALNSLRVHSASVNVHQGVAITEFVVSPLFGSPPAAELVRQQFVGALNGDVDVLGMLQKRDSDAASLVSARAGDVQAGVPVTRTAAPPRILWLDTAAPAKLILEVRAMDRAGLLALLAGALEGAGAGIVWAKVNTFGSTAADVFCVTVPAELDARAAVEQHLLEVLGASVDVVVDEPVGD.

Residues 1 to 315 (MEAESPCAAS…ALVRRPKRRP (315 aa)) are uridylyltransferase. The uridylyl-removing stretch occupies residues 316–609 (LDEGVVEYAG…EISPRDGERI (294 aa)). Residues 430–544 (VDRHVVETAV…LEVLHALSEA (115 aa)) form the HD domain. 2 ACT domains span residues 610–686 (DAVI…GMLQ) and 730–805 (ILEV…VDEP).

Belongs to the GlnD family. The cofactor is Mg(2+).

It catalyses the reaction [protein-PII]-L-tyrosine + UTP = [protein-PII]-uridylyl-L-tyrosine + diphosphate. The enzyme catalyses [protein-PII]-uridylyl-L-tyrosine + H2O = [protein-PII]-L-tyrosine + UMP + H(+). In terms of biological role, modifies, by uridylylation and deuridylylation, the PII regulatory protein (GlnB), in response to the nitrogen status of the cell that GlnD senses through the glutamine level. Under low glutamine levels, catalyzes the conversion of the PII protein and UTP to PII-UMP and PPi, while under higher glutamine levels, GlnD hydrolyzes PII-UMP to PII and UMP (deuridylylation). Thus, controls uridylylation state and activity of the PII protein, and plays an important role in the regulation of nitrogen assimilation and metabolism. This Mycobacterium tuberculosis (strain CDC 1551 / Oshkosh) protein is Bifunctional uridylyltransferase/uridylyl-removing enzyme.